A 213-amino-acid chain; its full sequence is Small ribosomal subunit protein uS3c (213 aa).

One can recognise a KH type-2 domain in the interval 39–109 (IRKYLNAKLA…KFRITITYLQ (71 aa)).

The protein belongs to the universal ribosomal protein uS3 family. In terms of assembly, part of the 30S ribosomal subunit.

It is found in the plastid. It localises to the chloroplast. This is Small ribosomal subunit protein uS3c (rps3) from Mesostigma viride (Green alga).